A 196-amino-acid chain; its full sequence is Serine recombinase PinQ (196 aa).

The Resolvase/invertase-type recombinase catalytic domain maps to 3–143; sequence QIFAYCRIST…SGIVRARGAG (141 aa). Ser-11 functions as the O-(5'-phospho-DNA)-serine intermediate in the catalytic mechanism.

This sequence belongs to the site-specific recombinase resolvase family.

The protein is Serine recombinase PinQ (pinQ) of Escherichia coli (strain K12).